The chain runs to 181 residues: dCTP deaminase (181 aa).

Residues 100-105 and aspartate 116 contribute to the dCTP site; that span reads RSTFAR. Glutamate 126 (proton donor/acceptor) is an active-site residue. Residues tyrosine 158 and glutamine 165 each coordinate dCTP. The tract at residues 160–181 is disordered; the sequence is GKYQGQRGVTPPKLDNSSSKNF.

This sequence belongs to the dCTP deaminase family. Homotrimer.

It carries out the reaction dCTP + H2O + H(+) = dUTP + NH4(+). It participates in pyrimidine metabolism; dUMP biosynthesis; dUMP from dCTP (dUTP route): step 1/2. Functionally, catalyzes the deamination of dCTP to dUTP. In Desulfurococcus amylolyticus (strain DSM 18924 / JCM 16383 / VKM B-2413 / 1221n) (Desulfurococcus kamchatkensis), this protein is dCTP deaminase.